Here is a 182-residue protein sequence, read N- to C-terminus: Ribosome maturation factor RimP (182 aa).

The protein belongs to the RimP family.

The protein resides in the cytoplasm. Functionally, required for maturation of 30S ribosomal subunits. This chain is Ribosome maturation factor RimP, found in Chloroherpeton thalassium (strain ATCC 35110 / GB-78).